A 345-amino-acid polypeptide reads, in one-letter code: Dihydroorotase (345 aa).

The Zn(2+) site is built by H14 and H16. Residues 16-18 (HLR) and N42 contribute to the substrate site. Positions 102, 139, and 177 each coordinate Zn(2+). K102 is modified (N6-carboxylysine). H139 provides a ligand contact to substrate. L222 serves as a coordination point for substrate. Position 250 (D250) interacts with Zn(2+). D250 is a catalytic residue. 2 residues coordinate substrate: H254 and A266.

The protein belongs to the metallo-dependent hydrolases superfamily. DHOase family. Class II DHOase subfamily. As to quaternary structure, homodimer. Requires Zn(2+) as cofactor.

It catalyses the reaction (S)-dihydroorotate + H2O = N-carbamoyl-L-aspartate + H(+). Its pathway is pyrimidine metabolism; UMP biosynthesis via de novo pathway; (S)-dihydroorotate from bicarbonate: step 3/3. Catalyzes the reversible cyclization of carbamoyl aspartate to dihydroorotate. The chain is Dihydroorotase from Nitrosomonas eutropha (strain DSM 101675 / C91 / Nm57).